The sequence spans 432 residues: Glutamate-1-semialdehyde 2,1-aminomutase (432 aa).

Residue Lys265 is modified to N6-(pyridoxal phosphate)lysine.

Belongs to the class-III pyridoxal-phosphate-dependent aminotransferase family. HemL subfamily. In terms of assembly, homodimer. The cofactor is pyridoxal 5'-phosphate.

It is found in the cytoplasm. It carries out the reaction (S)-4-amino-5-oxopentanoate = 5-aminolevulinate. It participates in porphyrin-containing compound metabolism; protoporphyrin-IX biosynthesis; 5-aminolevulinate from L-glutamyl-tRNA(Glu): step 2/2. This chain is Glutamate-1-semialdehyde 2,1-aminomutase, found in Vibrio cholerae serotype O1 (strain ATCC 39541 / Classical Ogawa 395 / O395).